The following is a 110-amino-acid chain: Acid stress chaperone HdeA (110 aa).

The first 21 residues, 1–21 (MKKVLGVILGGLLLLPVVSNA), serve as a signal peptide directing secretion. Cys-39 and Cys-87 are oxidised to a cystine.

This sequence belongs to the HdeA family.

It localises to the periplasm. Functionally, required for optimal acid stress protection. Exhibits a chaperone-like activity only at low pH by suppressing non-specifically the aggregation of denaturated periplasmic proteins. The protein is Acid stress chaperone HdeA of Escherichia coli O157:H7.